Reading from the N-terminus, the 466-residue chain is Adenosylhomocysteinase (466 aa).

The substrate site is built by threonine 57, aspartate 132, and glutamate 192. Residue 193–195 (TTT) coordinates NAD(+). Residues lysine 222 and aspartate 226 each contribute to the substrate site. Residues asparagine 227, 256–261 (GYGDVG), glutamate 279, asparagine 314, 335–337 (IGH), and asparagine 380 contribute to the NAD(+) site.

It belongs to the adenosylhomocysteinase family. Requires NAD(+) as cofactor.

The protein resides in the cytoplasm. It carries out the reaction S-adenosyl-L-homocysteine + H2O = L-homocysteine + adenosine. Its pathway is amino-acid biosynthesis; L-homocysteine biosynthesis; L-homocysteine from S-adenosyl-L-homocysteine: step 1/1. Functionally, may play a key role in the regulation of the intracellular concentration of adenosylhomocysteine. The chain is Adenosylhomocysteinase from Rhizobium rhizogenes (strain K84 / ATCC BAA-868) (Agrobacterium radiobacter).